Here is a 940-residue protein sequence, read N- to C-terminus: Gamma-aminobutyric acid type B receptor subunit 2 (940 aa).

Residues 1 to 40 (MASPPSSGQPRPPPPPPPPARLLLPLLLSLLLWLAPGAWG) form the signal peptide. The Extracellular segment spans residues 41-482 (WTRGAPRPPP…LRKISLPLYS (442 aa)). N-linked (GlcNAc...) asparagine glycosylation is present at Asn89. 3 disulfide bridges follow: Cys107–Cys134, Cys236–Cys265, and Cys264–Cys301. N-linked (GlcNAc...) asparagine glycosylation is found at Asn297, Asn388, Asn403, and Asn452. A helical transmembrane segment spans residues 483-503 (ILSALTILGMIMASAFLFFNI). The Cytoplasmic portion of the chain corresponds to 504–521 (KNRNQKLIKMSSPYMNNL). A helical membrane pass occupies residues 522–542 (IILGGMLSYASIFLFGLDGSF). Topologically, residues 543 to 550 (VSEKTFET) are extracellular. Residues 551-571 (LCTVRTWILTVGYTTAFGAMF) form a helical membrane-spanning segment. Residues 572–596 (AKTWRVHAIFKNVKMKKKIIKDQKL) are Cytoplasmic-facing. A helical membrane pass occupies residues 597–617 (LVIVGGMLLIDLCILICWQAV). Residues 618 to 653 (DPLRRTVERYSMEPDPAGRDISIRPLLEHCENTHMT) are Extracellular-facing. Residues 654-674 (IWLGIVYAYKGLLMLFGCFLA) traverse the membrane as a helical segment. At 675–690 (WETRNVSIPALNDSKY) the chain is on the cytoplasmic side. A helical transmembrane segment spans residues 691 to 711 (IGMSVYNVGIMCIIGAAVSFL). The Extracellular portion of the chain corresponds to 712 to 719 (TRDQPNVQ). Residues 720-740 (FCIVALVIIFCSTITLCLVFV) form a helical membrane-spanning segment. The Cytoplasmic segment spans residues 741–940 (PKLITLRTNP…PSFRVMVSGL (200 aa)). The tract at residues 762–789 (TQNQKKEDSKTSTSVTSVNQASTSRLEG) is disordered. Over residues 772 to 786 (TSTSVTSVNQASTSR) the composition is skewed to polar residues. Residues Ser775 and Ser778 each carry the phosphoserine modification. A coiled-coil region spans residues 780-818 (NQASTSRLEGLQSENHRLRMKITELDKDLEEVTMQLQDT). Thr818 carries the post-translational modification Phosphothreonine. Phosphoserine is present on residues Ser883, Ser892, Ser912, Ser915, Ser919, and Ser923.

The protein belongs to the G-protein coupled receptor 3 family. GABA-B receptor subfamily. As to quaternary structure, heterodimer of GABBR1 and GABBR2. Homodimers may form, but are inactive. Interacts (via C-terminus) with ATF4 (via leucine zipper domain). Interacts with KCTD8, KCTD12 and KCTD16; this interaction determines the pharmacology and kinetics of the receptor response, the KCTD proteins markedly accelerating the GABA-B response, although to different extents. Highly expressed in areas of the brain including thalamic nuclei, the hippocampus, cerebellar Purkinje cells and the medial habenula, and moderately expressed in the cerebral cortex, certain anterioventral thalamic nuclei, dorsal medial hypothalamic nucleus and suprachiasmatic nuclei. Also weakly expressed in the testis.

The protein resides in the cell membrane. It localises to the postsynaptic cell membrane. Its subcellular location is the perikaryon. It is found in the cell projection. The protein localises to the dendrite. Functionally, component of a heterodimeric G-protein coupled receptor for GABA, formed by GABBR1 and GABBR2. Within the heterodimeric GABA receptor, only GABBR1 seems to bind agonists, while GABBR2 mediates coupling to G proteins. Ligand binding causes a conformation change that triggers signaling via guanine nucleotide-binding proteins (G proteins) and modulates the activity of down-stream effectors, such as adenylate cyclase. Signaling inhibits adenylate cyclase, stimulates phospholipase A2, activates potassium channels, inactivates voltage-dependent calcium-channels and modulates inositol phospholipid hydrolysis. Plays a critical role in the fine-tuning of inhibitory synaptic transmission. Pre-synaptic GABA receptor inhibits neurotransmitter release by down-regulating high-voltage activated calcium channels, whereas postsynaptic GABA receptor decreases neuronal excitability by activating a prominent inwardly rectifying potassium (Kir) conductance that underlies the late inhibitory postsynaptic potentials. Not only implicated in synaptic inhibition but also in hippocampal long-term potentiation, slow wave sleep, muscle relaxation and antinociception. This chain is Gamma-aminobutyric acid type B receptor subunit 2 (Gabbr2), found in Rattus norvegicus (Rat).